A 469-amino-acid chain; its full sequence is Aspartyl/glutamyl-tRNA(Asn/Gln) amidotransferase subunit B (469 aa).

The protein belongs to the GatB/GatE family. GatB subfamily. As to quaternary structure, heterotrimer of A, B and C subunits.

It catalyses the reaction L-glutamyl-tRNA(Gln) + L-glutamine + ATP + H2O = L-glutaminyl-tRNA(Gln) + L-glutamate + ADP + phosphate + H(+). The enzyme catalyses L-aspartyl-tRNA(Asn) + L-glutamine + ATP + H2O = L-asparaginyl-tRNA(Asn) + L-glutamate + ADP + phosphate + 2 H(+). Its function is as follows. Allows the formation of correctly charged Asn-tRNA(Asn) or Gln-tRNA(Gln) through the transamidation of misacylated Asp-tRNA(Asn) or Glu-tRNA(Gln) in organisms which lack either or both of asparaginyl-tRNA or glutaminyl-tRNA synthetases. The reaction takes place in the presence of glutamine and ATP through an activated phospho-Asp-tRNA(Asn) or phospho-Glu-tRNA(Gln). The sequence is that of Aspartyl/glutamyl-tRNA(Asn/Gln) amidotransferase subunit B from Methanococcus maripaludis (strain DSM 14266 / JCM 13030 / NBRC 101832 / S2 / LL).